Consider the following 142-residue polypeptide: Hemoglobin subunit alpha (142 aa).

Residues 2–142 (VLSPADKSNV…VSTVLTSKYR (141 aa)) form the Globin domain. Serine 4 is subject to Phosphoserine. N6-succinyllysine is present on residues lysine 8 and lysine 12. Lysine 17 is modified (N6-acetyllysine; alternate). Lysine 17 carries the N6-succinyllysine; alternate modification. Tyrosine 25 carries the phosphotyrosine modification. Serine 36 is modified (phosphoserine). The residue at position 41 (lysine 41) is an N6-succinyllysine. Phosphoserine is present on serine 50. Histidine 59 lines the O2 pocket. Heme b is bound at residue histidine 88. Serine 103 carries the phosphoserine modification. Threonine 109 carries the post-translational modification Phosphothreonine. 2 positions are modified to phosphoserine: serine 125 and serine 132. Phosphothreonine occurs at positions 135 and 138. Phosphoserine is present on serine 139.

Belongs to the globin family. Heterotetramer of two alpha chains and two beta chains. In terms of tissue distribution, red blood cells.

In terms of biological role, involved in oxygen transport from the lung to the various peripheral tissues. Hemopressin acts as an antagonist peptide of the cannabinoid receptor CNR1. Hemopressin-binding efficiently blocks cannabinoid receptor CNR1 and subsequent signaling. The sequence is that of Hemoglobin subunit alpha (HBA) from Macaca fuscata fuscata (Japanese macaque).